Reading from the N-terminus, the 441-residue chain is tRNA-2-methylthio-N(6)-dimethylallyladenosine synthase (441 aa).

An MTTase N-terminal domain is found at 2–117 (KGLYIKSYGC…LPELLVKAHR (116 aa)). [4Fe-4S] cluster-binding residues include Cys-11, Cys-47, Cys-80, Cys-157, Cys-161, and Cys-164. Residues 143 to 374 (KNQETSAFIS…QKLLREQQLA (232 aa)) enclose the Radical SAM core domain.

The protein belongs to the methylthiotransferase family. MiaB subfamily. As to quaternary structure, monomer. It depends on [4Fe-4S] cluster as a cofactor.

It localises to the cytoplasm. The catalysed reaction is N(6)-dimethylallyladenosine(37) in tRNA + (sulfur carrier)-SH + AH2 + 2 S-adenosyl-L-methionine = 2-methylsulfanyl-N(6)-dimethylallyladenosine(37) in tRNA + (sulfur carrier)-H + 5'-deoxyadenosine + L-methionine + A + S-adenosyl-L-homocysteine + 2 H(+). Its function is as follows. Catalyzes the methylthiolation of N6-(dimethylallyl)adenosine (i(6)A), leading to the formation of 2-methylthio-N6-(dimethylallyl)adenosine (ms(2)i(6)A) at position 37 in tRNAs that read codons beginning with uridine. In Ehrlichia canis (strain Jake), this protein is tRNA-2-methylthio-N(6)-dimethylallyladenosine synthase.